The following is a 553-amino-acid chain: Coiled-coil domain-containing protein 22 homolog (553 aa).

The tract at residues 236-264 (DSEEPAPPPISTVKPDASAEEEASPIQEL) is disordered. 3 coiled-coil regions span residues 261 to 286 (IQEL…KAHA), 314 to 407 (ERTS…QSLA), and 498 to 549 (NVTK…VEQP).

The protein belongs to the CCDC22 family.

This chain is Coiled-coil domain-containing protein 22 homolog, found in Drosophila erecta (Fruit fly).